The chain runs to 125 residues: Small ribosomal subunit protein uS13 (125 aa).

A disordered region spans residues 97–125 (PVRGQKTRSNARTRKGPRPSRIKTKKKSS). Positions 101–125 (QKTRSNARTRKGPRPSRIKTKKKSS) are enriched in basic residues.

This sequence belongs to the universal ribosomal protein uS13 family. Part of the 30S ribosomal subunit. Forms a loose heterodimer with protein S19. Forms two bridges to the 50S subunit in the 70S ribosome.

Functionally, located at the top of the head of the 30S subunit, it contacts several helices of the 16S rRNA. In the 70S ribosome it contacts the 23S rRNA (bridge B1a) and protein L5 of the 50S subunit (bridge B1b), connecting the 2 subunits; these bridges are implicated in subunit movement. Contacts the tRNAs in the A and P-sites. This is Small ribosomal subunit protein uS13 from Thermotoga maritima (strain ATCC 43589 / DSM 3109 / JCM 10099 / NBRC 100826 / MSB8).